The following is a 66-amino-acid chain: FMRFamide-like neuropeptides 24 (66 aa).

The first 22 residues, 1–22, serve as a signal peptide directing secretion; sequence MSRTSIILVLAIFVAIAAIAQC. Positions 23–48 are excised as a propeptide; that stretch reads RNIQYDVDEISPEAAFRYAQWGEIPH. The residue at position 61 (phenylalanine 61) is a Phenylalanine amide. A propeptide spanning residues 65-66 is cleaved from the precursor; that stretch reads SV.

The protein belongs to the FARP (FMRFamide related peptide) family.

It localises to the secreted. FMRFamides and FMRFamide-like peptides are neuropeptides. This is FMRFamide-like neuropeptides 24 from Caenorhabditis briggsae.